A 236-amino-acid polypeptide reads, in one-letter code: Aquaporin Z (236 aa).

2 helical membrane-spanning segments follow: residues 12 to 32 and 37 to 57; these read FFGT…AAGV and IGYA…AYAV. The short motif at 66–68 is the NPA 1 element; the sequence is NPA. Helical transmembrane passes span 92-112, 136-156, and 163-183; these read VVGA…VAGF, AALI…LGAT, and GFAP…SIPV. The short motif at 189-191 is the NPA 2 element; it reads NPA. The chain crosses the membrane as a helical span at residues 197 to 217; the sequence is ALFVGGWALEQLWLFWLAPIA.

It belongs to the MIP/aquaporin (TC 1.A.8) family. Homotetramer.

The protein resides in the cell inner membrane. It catalyses the reaction H2O(in) = H2O(out). Functionally, channel that permits osmotically driven movement of water in both directions. It is involved in the osmoregulation and in the maintenance of cell turgor during volume expansion in rapidly growing cells. It mediates rapid entry or exit of water in response to abrupt changes in osmolarity. The chain is Aquaporin Z from Bordetella bronchiseptica (strain ATCC BAA-588 / NCTC 13252 / RB50) (Alcaligenes bronchisepticus).